The primary structure comprises 90 residues: DNA-binding protein HRm (90 aa).

This sequence belongs to the bacterial histone-like protein family.

Functionally, histone-like DNA-binding protein which is capable of wrapping DNA to stabilize it, and thus to prevent its denaturation under extreme environmental conditions. The protein is DNA-binding protein HRm (hupB) of Rhizobium meliloti (strain 1021) (Ensifer meliloti).